The primary structure comprises 143 residues: Transcription antitermination protein NusB (143 aa).

Belongs to the NusB family.

Involved in transcription antitermination. Required for transcription of ribosomal RNA (rRNA) genes. Binds specifically to the boxA antiterminator sequence of the ribosomal RNA (rrn) operons. The chain is Transcription antitermination protein NusB from Desulfatibacillum aliphaticivorans.